Consider the following 640-residue polypeptide: Chaperone protein dnaK2 (640 aa).

Threonine 197 is modified (phosphothreonine; by autocatalysis). The interval 605 to 640 (VYQSAQSSDGTGSSSSGGSGSGGDDEVIDAEFSETK) is disordered. A compositionally biased stretch (acidic residues) spans 627 to 640 (GDDEVIDAEFSETK).

This sequence belongs to the heat shock protein 70 family.

In terms of biological role, acts as a chaperone. The sequence is that of Chaperone protein dnaK2 (dnaK2) from Thermosynechococcus vestitus (strain NIES-2133 / IAM M-273 / BP-1).